A 198-amino-acid chain; its full sequence is uncharacterized protein (198 aa).

The protein resides in the plastid. It is found in the chloroplast. This is an uncharacterized protein from Antithamnion sp. (Red alga).